The sequence spans 265 residues: Short-chain dehydrogenase/reductase fsr5 (265 aa).

The N-terminal stretch at 1–32 (MASLGKYVSKLAGSRVLVIGGSSGIGFGVAEA) is a signal peptide. The NADP(+) site is built by serine 22, serine 23, isoleucine 25, serine 45, and lysine 50. A glycan (N-linked (GlcNAc...) asparagine) is linked at asparagine 62. The NADP(+) site is built by asparagine 88, arginine 130, and threonine 204. 2 N-linked (GlcNAc...) asparagine glycosylation sites follow: asparagine 218 and asparagine 250.

This sequence belongs to the short-chain dehydrogenases/reductases (SDR) family.

Short-chain dehydrogenase/reductase; part of the gene cluster that mediates the biosynthesis of fusarubins, highly pigmented naphthoquinones responsible for the coloration of the fruiting bodies. The non-reducing polyketide synthase FSR1 is responsible for the condensation of seven acetyl-CoA units to yield a haptaketide. After rings A and B are formed by aldol-type cyclization, the PKS-derived product is released as 6-O-demethylfusarubinaldehyde. Then, two hydroxyl groups at C-5 and C-10 are incorporated by FSR3, and simultaneously hydroxyl groups at C-6 and C-8 are methylated by FSR2. The aldehyde is, on the one hand, reduced by FSR3 to 8-O-methylfusarubin alcohol, which equilibrates mainly with 8-O-methylfusarubin and only small amounts of 8-O-methylnectriafurone. On the other hand, the aldehyde can be oxidized to form 8-O-methylfusarubinic acid, a reaction driven by FSR3 equilibrating with 8-O-methylfusarubinlactone, finally resulting in 8-O-methylanhydrofusarubinlactol after a further reduction step and loss of water. 8-O-Methylfusarubinic acid can also undergo decarboxylation, resulting in 8-O-methyl-13-hydroxynorjavanicin after another hydroxylation step at C-13. Both steps are most likely also accomplished by FSR3. No enzymatic function has been determined so far for either FSR4 and FSR5. Their deletion does not alter the product spectrum, but the possibility that they catalyze specific enzymatic steps during perithecium development cannot be ruled out. FSR4 might possess a regulatory function in the biosynthesis of fusarubins. In Gibberella fujikuroi (strain CBS 195.34 / IMI 58289 / NRRL A-6831) (Bakanae and foot rot disease fungus), this protein is Short-chain dehydrogenase/reductase fsr5.